We begin with the raw amino-acid sequence, 295 residues long: Lipoyl synthase (295 aa).

Residues C34, C39, C45, C60, C64, C67, and S273 each coordinate [4Fe-4S] cluster. The Radical SAM core domain maps to 46–262 (WNKRHATIMV…KRMAYAKGFS (217 aa)).

The protein belongs to the radical SAM superfamily. Lipoyl synthase family. [4Fe-4S] cluster serves as cofactor.

It is found in the cytoplasm. It catalyses the reaction [[Fe-S] cluster scaffold protein carrying a second [4Fe-4S](2+) cluster] + N(6)-octanoyl-L-lysyl-[protein] + 2 oxidized [2Fe-2S]-[ferredoxin] + 2 S-adenosyl-L-methionine + 4 H(+) = [[Fe-S] cluster scaffold protein] + N(6)-[(R)-dihydrolipoyl]-L-lysyl-[protein] + 4 Fe(3+) + 2 hydrogen sulfide + 2 5'-deoxyadenosine + 2 L-methionine + 2 reduced [2Fe-2S]-[ferredoxin]. It participates in protein modification; protein lipoylation via endogenous pathway; protein N(6)-(lipoyl)lysine from octanoyl-[acyl-carrier-protein]: step 2/2. Its function is as follows. Catalyzes the radical-mediated insertion of two sulfur atoms into the C-6 and C-8 positions of the octanoyl moiety bound to the lipoyl domains of lipoate-dependent enzymes, thereby converting the octanoylated domains into lipoylated derivatives. This Anaplasma phagocytophilum (strain HZ) protein is Lipoyl synthase.